Here is a 69-residue protein sequence, read N- to C-terminus: DNA gyrase inhibitor YacG (69 aa).

4 residues coordinate Zn(2+): Cys7, Cys10, Cys26, and Cys30.

It belongs to the DNA gyrase inhibitor YacG family. In terms of assembly, interacts with GyrB. Requires Zn(2+) as cofactor.

Inhibits all the catalytic activities of DNA gyrase by preventing its interaction with DNA. Acts by binding directly to the C-terminal domain of GyrB, which probably disrupts DNA binding by the gyrase. The polypeptide is DNA gyrase inhibitor YacG (Shewanella baltica (strain OS195)).